Reading from the N-terminus, the 634-residue chain is Kelch-like protein 22 (634 aa).

An N-acetylalanine modification is found at alanine 2. The 68-residue stretch at 50-117 (FDVVLVVEGR…IYTSELELSL (68 aa)) folds into the BTB domain. Kelch repeat units follow at residues 299 to 349 (CVVG…VLNN), 350 to 399 (FVYL…VVGR), 400 to 446 (YIYA…TLEG), 448 to 493 (MYIT…TLLN), 494 to 544 (KLYV…VLDN), and 545 to 593 (RIYV…VLTL). Threonine 463 is subject to Phosphothreonine. At tyrosine 466 the chain carries Phosphotyrosine. Threonine 475 carries the phosphothreonine modification. Residues 600 to 634 (EPPRGTPDRSQADPDFASEVMSVSDWEEFDNSSED) are disordered. Threonine 605 is subject to Phosphothreonine. The segment covering 624–634 (DWEEFDNSSED) has biased composition (acidic residues).

As to quaternary structure, component of the BCR(KLHL22) E3 ubiquitin ligase complex, at least composed of CUL3, KLHL22 and RBX1. Interacts with PLK1. Interacts with DEPDC5 (via DEP domain); the interaction depends on amino acid availability. Interacts with YWHAE; required for the nuclear localization of KLHL22 upon amino acid starvation.

It localises to the cytoplasm. Its subcellular location is the cytosol. The protein resides in the cytoskeleton. It is found in the microtubule organizing center. The protein localises to the centrosome. It localises to the spindle. Its subcellular location is the nucleus. The protein resides in the lysosome. It participates in protein modification; protein ubiquitination. In terms of biological role, substrate-specific adapter of a BCR (BTB-CUL3-RBX1) E3 ubiquitin ligase complex required for chromosome alignment and localization of PLK1 at kinetochores. The BCR(KLHL22) ubiquitin ligase complex mediates monoubiquitination of PLK1, leading to PLK1 dissociation from phosphoreceptor proteins and subsequent removal from kinetochores, allowing silencing of the spindle assembly checkpoint (SAC) and chromosome segregation. Monoubiquitination of PLK1 does not lead to PLK1 degradation. The BCR(KLHL22) ubiquitin ligase complex is also responsible for the amino acid-stimulated 'Lys-48' polyubiquitination and proteasomal degradation of DEPDC5. Through the degradation of DEPDC5, releases the GATOR1 complex-mediated inhibition of the TORC1 pathway. It is therefore an amino acid-dependent activator within the amino acid-sensing branch of the TORC1 pathway, indirectly regulating different cellular processes including cell growth and autophagy. In Homo sapiens (Human), this protein is Kelch-like protein 22.